A 497-amino-acid polypeptide reads, in one-letter code: Probable D-lactate dehydrogenase, mitochondrial (497 aa).

Positions 65–246 (HRCRPPDVVV…TKATLRLYGV (182 aa)) constitute an FAD-binding PCMH-type domain.

The protein belongs to the FAD-binding oxidoreductase/transferase type 4 family. FAD is required as a cofactor.

It is found in the mitochondrion. The catalysed reaction is (R)-lactate + 2 Fe(III)-[cytochrome c] = 2 Fe(II)-[cytochrome c] + pyruvate + 2 H(+). In terms of biological role, involved in D-lactate, but not L-lactate catabolic process. This is Probable D-lactate dehydrogenase, mitochondrial (ldhd) from Danio rerio (Zebrafish).